Consider the following 691-residue polypeptide: MGQALGIKSCDFQAARNNEEHHTKALSSRRLFVRRGQPFTIILYFRAPVRAFLPALKKVALTAQTGEQPSKINRTQATFPISSLGDRKWWSAVVEERDAQSWTISVTTPADAVIGHYSLLLQVSGRKQLLLGQFTLLFNPWNREDAVFLKNEAQRMEYLLNQNGLIYLGTADCIQAESWDFGQFEGDVIDLSLRLLSKDKQVEKWSQPVHVARVLGALLHFLKEQRVLPTPQTQATQEGALLNKRRGSVPILRQWLTGRGRPVYDGQAWVLAAVACTVLRCLGIPARVVTTFASAQGTGGRLLIDEYYNEEGLQNGEGQRGRIWIFQTSTECWMTRPALPQGYDGWQILHPSAPNGGGVLGSCDLVPVRAVKEGTLGLTPAVSDLFAAINASCVVWKCCEDGTLELTDSNTKYVGNNISTKGVGSDRCEDITQNYKYPEGSLQEKEVLERVEKEKMEREKDNGIRPPSLETASPLYLLLKAPSSLPLRGDAQISVTLVNHSEQEKAVQLAIGVQAVHYNGVLAAKLWRKKLHLTLSANLEKIITIGLFFSNFERNPPENTFLRLTAMATHSESNLSCFAQEDIAICRPHLAIKMPEKAEQYQPLTASVSLQNSLDAPMEDCVISILGRGLIHRERSYRFRSVWPENTMCAKFQFTPTHVGLQRLTVEVDCNMFQNLTNYKSVTVVAPELSA.

G2 is lipidated: N-myristoyl glycine. A band 3 binding region spans residues 31–39 (LFVRRGQPF). S248 carries the post-translational modification Phosphoserine; by PKA.

Belongs to the transglutaminase superfamily. Transglutaminase family. In terms of assembly, component of the ankyrin-1 complex in the erythrocyte, composed of ANK1, RHCE, RHAG, SLC4A1, EPB42, GYPA, GYPB and AQP1. Interacts with SLC4A1 (via the cytoplasmic domain); this interaction is mediated by the SLC4A1 Band 3-I dimer. Interacts with ANK1 (via ANK 1-13 repeats). Interacts with AQP1 (via the C-terminal). In terms of processing, both cAMP-dependent kinase (CAPK) and another kinase present in the red-blood cells seem to be able to phosphorylate EPB42.

It localises to the cell membrane. The protein localises to the cytoplasm. It is found in the cytoskeleton. Its function is as follows. Component of the ankyrin-1 complex, a multiprotein complex involved in the stability and shape of the erythrocyte membrane. This Homo sapiens (Human) protein is Protein 4.2.